The sequence spans 269 residues: C-type lectin domain family 2 member G (269 aa).

The Cytoplasmic portion of the chain corresponds to 1–107; the sequence is MNITRASLPM…SPESSAKLYC (107 aa). Residues 108–128 traverse the membrane as a helical; Signal-anchor for type II membrane protein segment; the sequence is CCGVIMVLTVAVVALSVALPA. Topologically, residues 129–269 are extracellular; it reads TKTEQILINK…SLHCPTPVPV (141 aa). The 105-residue stretch at 150–254 folds into the C-type lectin domain; that stretch reads VGNKCFYFSE…HYIPRIWICS (105 aa). The N-linked (GlcNAc...) asparagine glycan is linked to Asn163. Cys171 and Cys253 form a disulfide bridge.

In terms of tissue distribution, detected in vagina, eye, tongue, stomach and spleen.

Its subcellular location is the cell membrane. In terms of biological role, inhibits osteoclast formation. The sequence is that of C-type lectin domain family 2 member G (Clec2g) from Mus musculus (Mouse).